Reading from the N-terminus, the 249-residue chain is Pyridoxamine 5'-phosphate oxidase family protein ustO (249 aa).

21–24 (LFFV) is a binding site for substrate. Residues 76–81 (ATVMFC), 91–92 (RL), Arg105, and 163–164 (RL) contribute to the FMN site. 215–217 (ASY) provides a ligand contact to substrate. The chain crosses the membrane as a helical span at residues 227–247 (TGMALMFLVMVVAQWVGYVLY).

Belongs to the pyridoxamine 5'-phosphate oxidase family. FMN serves as cofactor.

It localises to the membrane. Its pathway is mycotoxin biosynthesis. Pyridoxamine 5'-phosphate oxidase family protein; part of the gene cluster that mediates the biosynthesis of the secondary metabolite ustiloxin B, an antimitotic tetrapeptide. First, ustA is processed by the subtilisin-like endoprotease Kex2 that is outside the ustiloxin B gene cluster, at the C-terminal side of Arg-Lys, after transfer to Golgi apparatus through the endoplasmic reticulum (ER). Cleavage by KEX2 generates 16 peptides YAIG-I to YAIG-XVI. To process the precursor peptide further, at least two peptidases are necessary to cleave the N-terminal and C-terminal sides of the Tyr-Ala-Ile-Gly core peptide which serves as backbone for the synthesis of ustiloxin B, through cyclization and modification of the tyrosine with a non-protein coding amino acid, norvaline. One of the two peptidases must be the serine peptidase ustP; and the other pepdidase is probably ustH. Macrocyclization of the core peptide derived from ustA requires the tyrosinase ustQ, as well as the homologous oxidases ustYa and ustYb, and leads to the production of the first cyclization product N-desmethylustiloxin F. For the formation of N-desmethylustiloxin F, three oxidation steps are required, hydroxylation at the benzylic position, hydroxylation at either the aromatic ring of Tyr or beta-position of Ile, and oxidative cyclization. UstQ may catalyze the oxidation of a phenol moiety, whereas the ustYa and ustYb are most likely responsible for the remaining two-step oxidations. N-desmethylustiloxin F is then methylated by ustM to yield ustiloxin F which in turn substrate of the cytochrome P450 monooxygenase ustC which catalyzes the formation of S-deoxyustiloxin H. The flavoprotein monooxygenases ustF1 and ustF2 then participate in the modification of the side chain of S-deoxyustiloxin H, leading to the synthesis of an oxime intermediate, via ustiloxin H. Finally, carboxylative dehydration performed by the cysteine desulfurase-like protein ustD yields ustiloxin B. The polypeptide is Pyridoxamine 5'-phosphate oxidase family protein ustO (Aspergillus flavus (strain ATCC 200026 / FGSC A1120 / IAM 13836 / NRRL 3357 / JCM 12722 / SRRC 167)).